Here is a 1264-residue protein sequence, read N- to C-terminus: Box A-binding factor (1264 aa).

Residues 1 to 11 (MTKTTKPKEKA) show a composition bias toward basic and acidic residues. Disordered regions lie at residues 1–25 (MTKT…SGLG), 161–200 (TASD…ESVK), 234–253 (LISH…QHQQ), 405–463 (QLHQ…HALS), 523–585 (NQTQ…SAAT), and 599–627 (HNSS…PAFQ). A compositionally biased stretch (gly residues) spans 16 to 25 (AVIGSGSGLG). Low complexity predominate over residues 161–171 (TASDTAATSEA). Over residues 189–198 (SKAQNDASES) the composition is skewed to polar residues. Residues 409–421 (QQHHHQQQLHHHQ) show a composition bias toward basic residues. 3 stretches are compositionally biased toward low complexity: residues 422-438 (QQQQ…QQQQ), 447-459 (STSS…PSSS), and 523-554 (NQTQ…QQQQ). Residues 555 to 564 (QHHHNQHQHH) are compositionally biased toward basic residues. Low complexity-rich tracts occupy residues 565–585 (NSSS…SAAT) and 599–614 (HNSS…RSSH). The GATA-type zinc finger occupies 803-827 (CSNCHTTHTSLWRRNPAGEPVCNAC). Disordered stretches follow at residues 841–867 (TMKK…SKSK), 899–1048 (DDMK…SNEN), and 1181–1202 (EEMD…QHGE). Composition is skewed to low complexity over residues 909–950 (PYNS…GSTS) and 985–1007 (QMSP…HSPS). A compositionally biased stretch (polar residues) spans 1008-1023 (TPTSIFNTPSPTHQLH). Low complexity-rich tracts occupy residues 1024-1048 (NNNN…SNEN) and 1185-1200 (QSQQ…QQQH). 2 positions are modified to phosphoserine: Ser-1208 and Ser-1210.

In terms of assembly, interacts (via GATA-type Zn-finger domain) with Bfc; this interaction enhances srp binding to the promoter of crq/croquemort.

Its subcellular location is the nucleus. May function as a transcriptional activator protein and may play a key role in the organogenesis of the fat body. Binds a sequence element (5'-[TA]GATAA-3') found in the larval promoters of all known alcohol dehydrogenase (ADH) genes. Acts as a homeotic gene downstream of the terminal gap gene HKB to promote morphogenesis and differentiation of anterior and posterior midgut. Together with transcriptional cofactor Bfc directly binds the promoter of phagocytic receptor crq/croquemort to upregulate its expression and stimulate efferocytosis in response to apoptotic cells, including during embryogenesis. This is Box A-binding factor (srp) from Drosophila melanogaster (Fruit fly).